Consider the following 133-residue polypeptide: Ribosome-binding factor A (133 aa).

The protein belongs to the RbfA family. In terms of assembly, monomer. Binds 30S ribosomal subunits, but not 50S ribosomal subunits or 70S ribosomes.

The protein resides in the cytoplasm. Its function is as follows. One of several proteins that assist in the late maturation steps of the functional core of the 30S ribosomal subunit. Associates with free 30S ribosomal subunits (but not with 30S subunits that are part of 70S ribosomes or polysomes). Required for efficient processing of 16S rRNA. May interact with the 5'-terminal helix region of 16S rRNA. This Bordetella bronchiseptica (strain ATCC BAA-588 / NCTC 13252 / RB50) (Alcaligenes bronchisepticus) protein is Ribosome-binding factor A.